The chain runs to 363 residues: Inactive CLIP domain-containing serine protease A8 (363 aa).

A signal peptide spans 1-25 (MPSWWCCCCLVVLLYAQRMIVPSSA). The Clip domain maps to 33–82 (LQECPGGFCSPKYLCPNGTYNEANAQNQEIIMLRFGEEDVCQDYMQVCCS). Cystine bridges form between Cys-36–Cys-80, Cys-41–Cys-73, and Cys-47–Cys-81. 4 N-linked (GlcNAc...) asparagine glycosylation sites follow: Asn-49, Asn-83, Asn-117, and Asn-166. The 247-residue stretch at 114-360 (VEGNRTYAQY…FVTWINATIE (247 aa)) folds into the Peptidase S1 domain. 3 disulfide bridges follow: Cys-245-Cys-317, Cys-276-Cys-297, and Cys-307-Cys-336. Residues Asn-319 and Asn-356 are each glycosylated (N-linked (GlcNAc...) asparagine).

It belongs to the peptidase S1 family. CLIP subfamily. In terms of assembly, heterodimer of a light chain and a heavy chain; disulfide-linked. In terms of processing, secreted as a full-length protein. Proteolytically cleaved into two chains which remain covalently linked. Cleavage is induced by Gram-positive or Gram-negative bacteria infection.

The protein localises to the secreted. In terms of biological role, inactive serine protease which plays an essential role in the innate immune response against bacteria, fungi and protozoa infection by activating the melanization cascade. In the melanization cascade, acts downstream of TEP1 and SPCLIP1 to promote CLIPA28 and CLIPC9 proteolytic cleavage and CLIPC9 recruitment to microbial surfaces. In the resistant strain L3-5, required for the melanization of killed parasite P.berghei ookinetes which results in their clearance. In the susceptible strain G3, appears to be dispensable for ookinete elimination which occurs by lysis. Required for the melanization of Gram-positive and Gram-negative bacteria. During the late stage of fungus B.bassiana-mediated infection, required for the initiation of hyphae melanization by promoting prophenoloxidase PPO activation. The sequence is that of Inactive CLIP domain-containing serine protease A8 from Anopheles gambiae (African malaria mosquito).